A 615-amino-acid chain; its full sequence is Extracellular metalloproteinase 1 (615 aa).

The N-terminal stretch at 1–8 (SLPLHVLA) is a signal peptide. A propeptide spanning residues 9–235 (HPQPSTSTSL…VHNVVDYVAH (227 aa)) is cleaved from the precursor. Asn276 carries N-linked (GlcNAc...) asparagine glycosylation. Position 419 (His419) interacts with Zn(2+). Glu420 is an active-site residue. His423 serves as a coordination point for Zn(2+). 3 N-linked (GlcNAc...) asparagine glycosylation sites follow: Asn464, Asn583, and Asn612.

It belongs to the peptidase M36 family. It depends on Zn(2+) as a cofactor.

The protein localises to the secreted. Its function is as follows. Secreted metalloproteinase probably acting as a virulence factor. This Trichophyton equinum (Horse ringworm fungus) protein is Extracellular metalloproteinase 1 (MEP1).